The primary structure comprises 211 residues: Arginine exporter protein ArgO (211 aa).

The Cytoplasmic segment spans residues 1 to 38 (MFSYYFQGLALGAAMILPLGPQNAFVMNQGIRRQYHIM). The helical transmembrane segment at 39–58 (IALLCAISDLVLICAGIFGG) threads the bilayer. Residues 59 to 63 (SALLM) lie on the Periplasmic side of the membrane. The helical transmembrane segment at 64-91 (QSPWLLALVTWGGVAFLLWYGFGAFKTA) threads the bilayer. The Cytoplasmic segment spans residues 92-102 (MSSNIELASAE). A helical transmembrane segment spans residues 103–130 (VMKQGRWKIIATMLAVTWLNPHVYLDTF). Residues 131-140 (VVLGSLGGQL) lie on the Periplasmic side of the membrane. A helical membrane pass occupies residues 141–170 (DVEPKRWFALGTISASFLWFFGLALLAAWL). The Cytoplasmic segment spans residues 171 to 173 (APR). A helical transmembrane segment spans residues 174–200 (LRTAKAQRIINLVVGCVMWFIALQLAR). At 201–211 (DGIAHAQALFS) the chain is on the periplasmic side.

This sequence belongs to the LysE/ArgO transporter (TC 2.A.75) family. Monomer.

The protein localises to the cell inner membrane. It carries out the reaction L-arginine(in) = L-arginine(out). Its function is as follows. Involved in the export of arginine. Important to control the intracellular level of arginine and the correct balance between arginine and lysine. May also be involved in the export of canavanine (a plant-derived antimetabolite). The chain is Arginine exporter protein ArgO from Escherichia coli (strain K12).